The primary structure comprises 619 residues: UPF0329 protein ECU08_2070 (619 aa).

2 stretches are compositionally biased toward basic and acidic residues: residues 350 to 359 (EREKREESKG) and 369 to 385 (GAGE…RKEE). Positions 350–425 (EREKREESKG…REKKMGEEHH (76 aa)) are disordered. The span at 386-396 (EGVEVEEEESA) shows a compositional bias: acidic residues.

This sequence belongs to the UPF0329 family.

The chain is UPF0329 protein ECU08_2070 from Encephalitozoon cuniculi (strain GB-M1) (Microsporidian parasite).